Reading from the N-terminus, the 360-residue chain is S-adenosylmethionine:tRNA ribosyltransferase-isomerase (360 aa).

This sequence belongs to the QueA family. Monomer.

The protein localises to the cytoplasm. The catalysed reaction is 7-aminomethyl-7-carbaguanosine(34) in tRNA + S-adenosyl-L-methionine = epoxyqueuosine(34) in tRNA + adenine + L-methionine + 2 H(+). It functions in the pathway tRNA modification; tRNA-queuosine biosynthesis. Functionally, transfers and isomerizes the ribose moiety from AdoMet to the 7-aminomethyl group of 7-deazaguanine (preQ1-tRNA) to give epoxyqueuosine (oQ-tRNA). In Burkholderia pseudomallei (strain 1106a), this protein is S-adenosylmethionine:tRNA ribosyltransferase-isomerase.